A 189-amino-acid chain; its full sequence is NADH-quinone oxidoreductase subunit B (189 aa).

The [4Fe-4S] cluster site is built by C39, C40, C104, and C135.

The protein belongs to the complex I 20 kDa subunit family. NDH-1 is composed of 14 different subunits. Subunits NuoB, C, D, E, F, and G constitute the peripheral sector of the complex. The cofactor is [4Fe-4S] cluster.

Its subcellular location is the cell inner membrane. The enzyme catalyses a quinone + NADH + 5 H(+)(in) = a quinol + NAD(+) + 4 H(+)(out). Its function is as follows. NDH-1 shuttles electrons from NADH, via FMN and iron-sulfur (Fe-S) centers, to quinones in the respiratory chain. The immediate electron acceptor for the enzyme in this species is believed to be a menaquinone. Couples the redox reaction to proton translocation (for every two electrons transferred, four hydrogen ions are translocated across the cytoplasmic membrane), and thus conserves the redox energy in a proton gradient. In Chlorobaculum tepidum (strain ATCC 49652 / DSM 12025 / NBRC 103806 / TLS) (Chlorobium tepidum), this protein is NADH-quinone oxidoreductase subunit B.